A 293-amino-acid polypeptide reads, in one-letter code: GTPase Era (293 aa).

The region spanning 3-170 is the Era-type G domain; that stretch reads KSGFITIIGR…VELMVKYMPE (168 aa). The G1 stretch occupies residues 11–18; sequence GRPNVGKS. 11 to 18 provides a ligand contact to GTP; it reads GRPNVGKS. A G2 region spans residues 37 to 41; sequence QTTRN. The tract at residues 58-61 is G3; the sequence is DTPG. GTP-binding positions include 58–62 and 120–123; these read DTPGI and NKID. A G4 region spans residues 120 to 123; it reads NKID. Positions 149–151 are G5; that stretch reads ISA. The region spanning 201–278 is the KH type-2 domain; that stretch reads LSKEVPHGIA…YLEVWVKVKK (78 aa).

It belongs to the TRAFAC class TrmE-Era-EngA-EngB-Septin-like GTPase superfamily. Era GTPase family. As to quaternary structure, monomer.

Its subcellular location is the cytoplasm. It localises to the cell membrane. An essential GTPase that binds both GDP and GTP, with rapid nucleotide exchange. Plays a role in 16S rRNA processing and 30S ribosomal subunit biogenesis and possibly also in cell cycle regulation and energy metabolism. The protein is GTPase Era of Clostridium kluyveri (strain NBRC 12016).